A 33-amino-acid chain; its full sequence is uncharacterized protein (33 aa).

Residues 1-12 lie on the Cytoplasmic side of the membrane; the sequence is MKENKVQQISHK. Residues 13–33 traverse the membrane as a helical segment; the sequence is LINIVVFVAIVEYAYLFLHFY.

It localises to the cell inner membrane. This is an uncharacterized protein from Escherichia coli (strain K12).